Here is a 110-residue protein sequence, read N- to C-terminus: Holo-[acyl-carrier-protein] synthase (110 aa).

Mg(2+) is bound by residues D8 and E54.

This sequence belongs to the P-Pant transferase superfamily. AcpS family. The cofactor is Mg(2+).

Its subcellular location is the cytoplasm. It carries out the reaction apo-[ACP] + CoA = holo-[ACP] + adenosine 3',5'-bisphosphate + H(+). Functionally, transfers the 4'-phosphopantetheine moiety from coenzyme A to a Ser of acyl-carrier-protein. The sequence is that of Holo-[acyl-carrier-protein] synthase from Mycoplasma capricolum subsp. capricolum (strain California kid / ATCC 27343 / NCTC 10154).